Consider the following 195-residue polypeptide: Imidazoleglycerol-phosphate dehydratase (195 aa).

This sequence belongs to the imidazoleglycerol-phosphate dehydratase family.

It localises to the cytoplasm. It catalyses the reaction D-erythro-1-(imidazol-4-yl)glycerol 3-phosphate = 3-(imidazol-4-yl)-2-oxopropyl phosphate + H2O. Its pathway is amino-acid biosynthesis; L-histidine biosynthesis; L-histidine from 5-phospho-alpha-D-ribose 1-diphosphate: step 6/9. The chain is Imidazoleglycerol-phosphate dehydratase from Cereibacter sphaeroides (strain ATCC 17025 / ATH 2.4.3) (Rhodobacter sphaeroides).